Reading from the N-terminus, the 1131-residue chain is DNA polymerase II large subunit (1131 aa).

Belongs to the archaeal DNA polymerase II family. In terms of assembly, heterodimer of a large subunit and a small subunit.

It carries out the reaction DNA(n) + a 2'-deoxyribonucleoside 5'-triphosphate = DNA(n+1) + diphosphate. The enzyme catalyses Exonucleolytic cleavage in the 3'- to 5'-direction to yield nucleoside 5'-phosphates.. Functionally, possesses two activities: a DNA synthesis (polymerase) and an exonucleolytic activity that degrades single-stranded DNA in the 3'- to 5'-direction. Has a template-primer preference which is characteristic of a replicative DNA polymerase. This Methanococcus vannielii (strain ATCC 35089 / DSM 1224 / JCM 13029 / OCM 148 / SB) protein is DNA polymerase II large subunit.